A 361-amino-acid polypeptide reads, in one-letter code: MSLIVMATGGTGGHIYPAVAVSRELLARGHEAVLLGQRGGMEERVAAEQGLPFQGVNAGKLARSGQGRPDPRELLRAARGVAEARAFLRDARPGAVVGFGGFASLPGVLAAQTLGIPTVLHEQNARLGLTQRLAAGRARAVGTAYPHVLGLPEGKATLVGMPVREERLPRAEALAQLGLQDGPLTLLVMGGSQGSLALNHAVPDILREIFGPEGRAPEGPVQVLHATGPRWLAEVAPRVADLPWYKPVGYTNAVAAWSAADLAITRAGTGTLAEAAFHGVPLVMVPLPESAENHQYHNAVSVQEAGAGRVVEQEQLRGALGAAVLECAAAGTRAAMRKAAFLRSPVGAASRFADLVERHLR.

Residues 11 to 13, asparagine 124, arginine 164, serine 192, and glutamine 295 each bind UDP-N-acetyl-alpha-D-glucosamine; that span reads TGG.

It belongs to the glycosyltransferase 28 family. MurG subfamily.

The protein localises to the cell membrane. It carries out the reaction di-trans,octa-cis-undecaprenyl diphospho-N-acetyl-alpha-D-muramoyl-L-alanyl-D-glutamyl-meso-2,6-diaminopimeloyl-D-alanyl-D-alanine + UDP-N-acetyl-alpha-D-glucosamine = di-trans,octa-cis-undecaprenyl diphospho-[N-acetyl-alpha-D-glucosaminyl-(1-&gt;4)]-N-acetyl-alpha-D-muramoyl-L-alanyl-D-glutamyl-meso-2,6-diaminopimeloyl-D-alanyl-D-alanine + UDP + H(+). The protein operates within cell wall biogenesis; peptidoglycan biosynthesis. Cell wall formation. Catalyzes the transfer of a GlcNAc subunit on undecaprenyl-pyrophosphoryl-MurNAc-pentapeptide (lipid intermediate I) to form undecaprenyl-pyrophosphoryl-MurNAc-(pentapeptide)GlcNAc (lipid intermediate II). This chain is UDP-N-acetylglucosamine--N-acetylmuramyl-(pentapeptide) pyrophosphoryl-undecaprenol N-acetylglucosamine transferase, found in Deinococcus geothermalis (strain DSM 11300 / CIP 105573 / AG-3a).